Consider the following 634-residue polypeptide: Chaperone protein HtpG (634 aa).

Residues 1 to 342 (MTVETDKQTL…SSDLSLNVSR (342 aa)) form an a; substrate-binding region. Positions 343-559 (EILQSGPVVD…QGDLGLQMRQ (217 aa)) are b. The interval 560–634 (LLEASGQAVP…LNKLLLELSV (75 aa)) is c.

It belongs to the heat shock protein 90 family. In terms of assembly, homodimer.

The protein localises to the cytoplasm. Functionally, molecular chaperone. Has ATPase activity. The chain is Chaperone protein HtpG from Xanthomonas euvesicatoria pv. vesicatoria (strain 85-10) (Xanthomonas campestris pv. vesicatoria).